We begin with the raw amino-acid sequence, 472 residues long: Gamma-aminobutyric acid receptor subunit beta-2 (472 aa).

Residues 1–23 (RVRKKDYFGIWSFPLIIAAVCAQ) form the signal peptide. Over 24–239 (SVNDPSNMSL…LSLSFKLKRN (216 aa)) the chain is Extracellular. N-linked (GlcNAc...) asparagine glycans are attached at residues asparagine 30 and asparagine 102. Tyrosine 119 serves as a coordination point for histamine. The cysteines at positions 158 and 172 are disulfide-linked. Histamine-binding positions include 178 to 179 (SY) and threonine 224. 4-aminobutanoate contacts are provided by tyrosine 179 and threonine 224. Transmembrane regions (helical) follow at residues 240–260 (IGYF…LSWV), 271–290 (ARVA…NTHL), and 309–329 (GCFV…YIFF). Positions 287–308 (NTHLRETLPKIPYVKAIDMYLM) are etomidate binding; allosteric effector. At 330-450 (GRGPQRQKKA…LTDVNAIDRW (121 aa)) the chain is on the cytoplasmic side. Tyrosine 401 carries the post-translational modification Phosphotyrosine. The chain crosses the membrane as a helical span at residues 451-471 (SRIFFPVVFSFFNIVYWLYYV).

Belongs to the ligand-gated ion channel (TC 1.A.9) family. Gamma-aminobutyric acid receptor (TC 1.A.9.5) subfamily. GABRB2 sub-subfamily. As to quaternary structure, heteropentamer, formed by a combination of alpha (GABRA1-6), beta (GABRB1-3), gamma (GABRG1-3), delta (GABRD), epsilon (GABRE), rho (GABRR1-3), pi (GABRP) and theta (GABRQ) chains, each subunit exhibiting distinct physiological and pharmacological properties. Interacts with UBQLN1. May interact with KIF21B. Identified in a complex of 720 kDa composed of LHFPL4, NLGN2, GABRA1, GABRB2, GABRG2 and GABRB3. In terms of processing, glycosylated.

Its subcellular location is the postsynaptic cell membrane. The protein resides in the cell membrane. It localises to the cytoplasmic vesicle membrane. The enzyme catalyses chloride(in) = chloride(out). Allosterically activated by benzodiazepines. Allosterically activated by the anesthetic etomidate. Inhibited by the antagonist bicuculline. Potentiated by histamine. Its function is as follows. Beta subunit of the heteropentameric ligand-gated chloride channel gated by gamma-aminobutyric acid (GABA), a major inhibitory neurotransmitter in the brain. GABA-gated chloride channels, also named GABA(A) receptors (GABAAR), consist of five subunits arranged around a central pore and contain GABA active binding site(s) located at the alpha and beta subunit interface(s). When activated by GABA, GABAARs selectively allow the flow of chloride anions across the cell membrane down their electrochemical gradient. Chloride influx into the postsynaptic neuron following GABAAR opening decreases the neuron ability to generate a new action potential, thereby reducing nerve transmission. GABAARs containing alpha-1 and beta-2 or -3 subunits exhibit synaptogenic activity; the gamma-2 subunit being necessary but not sufficient to induce rapid synaptic contacts formation. Extrasynaptic beta-2 receptors contribute to the tonic GABAergic inhibition. Beta-containing GABAARs can simultaneously bind GABA and histamine where histamine binds at the interface of two neighboring beta subunits, which may be involved in the regulation of sleep and wakefulness. This Bos taurus (Bovine) protein is Gamma-aminobutyric acid receptor subunit beta-2 (GABRB2).